The following is a 598-amino-acid chain: Probable translation initiation factor IF-2 (598 aa).

Positions 8 to 226 (IRQPIISVLG…VTGLAQRFLE (219 aa)) constitute a tr-type G domain. The G1 stretch occupies residues 17 to 24 (GHVDHGKT). 17 to 24 (GHVDHGKT) lines the GTP pocket. A G2 region spans residues 42–46 (GITQH). The G3 stretch occupies residues 81-84 (DTPG). GTP is bound by residues 81–85 (DTPGH) and 135–138 (NKVD). The G4 stretch occupies residues 135 to 138 (NKVD). The tract at residues 203–205 (SGV) is G5.

Belongs to the TRAFAC class translation factor GTPase superfamily. Classic translation factor GTPase family. IF-2 subfamily.

Function in general translation initiation by promoting the binding of the formylmethionine-tRNA to ribosomes. Seems to function along with eIF-2. The sequence is that of Probable translation initiation factor IF-2 from Methanopyrus kandleri (strain AV19 / DSM 6324 / JCM 9639 / NBRC 100938).